The chain runs to 158 residues: Cyclic pyranopterin monophosphate synthase (158 aa).

Substrate contacts are provided by residues 75–77 (LCH) and 113–114 (ME). Residue aspartate 128 is part of the active site.

Belongs to the MoaC family. Homohexamer; trimer of dimers.

The enzyme catalyses (8S)-3',8-cyclo-7,8-dihydroguanosine 5'-triphosphate = cyclic pyranopterin phosphate + diphosphate. The protein operates within cofactor biosynthesis; molybdopterin biosynthesis. Functionally, catalyzes the conversion of (8S)-3',8-cyclo-7,8-dihydroguanosine 5'-triphosphate to cyclic pyranopterin monophosphate (cPMP). This chain is Cyclic pyranopterin monophosphate synthase, found in Actinobacillus pleuropneumoniae serotype 5b (strain L20).